A 443-amino-acid polypeptide reads, in one-letter code: Glutamyl-tRNA reductase (443 aa).

Substrate contacts are provided by residues 49–52 (TCNR), Ser109, 114–116 (ETQ), and Gln120. Residue Cys50 is the Nucleophile of the active site. 189-194 (GAGDMS) is a binding site for NADP(+).

The protein belongs to the glutamyl-tRNA reductase family. In terms of assembly, homodimer.

The catalysed reaction is (S)-4-amino-5-oxopentanoate + tRNA(Glu) + NADP(+) = L-glutamyl-tRNA(Glu) + NADPH + H(+). Its pathway is porphyrin-containing compound metabolism; protoporphyrin-IX biosynthesis; 5-aminolevulinate from L-glutamyl-tRNA(Glu): step 1/2. Its function is as follows. Catalyzes the NADPH-dependent reduction of glutamyl-tRNA(Glu) to glutamate 1-semialdehyde (GSA). The sequence is that of Glutamyl-tRNA reductase from Staphylococcus saprophyticus subsp. saprophyticus (strain ATCC 15305 / DSM 20229 / NCIMB 8711 / NCTC 7292 / S-41).